We begin with the raw amino-acid sequence, 70 residues long: UPF0337 protein BC_3635 (70 aa).

Belongs to the UPF0337 (CsbD) family.

The chain is UPF0337 protein BC_3635 from Bacillus cereus (strain ATCC 14579 / DSM 31 / CCUG 7414 / JCM 2152 / NBRC 15305 / NCIMB 9373 / NCTC 2599 / NRRL B-3711).